Here is a 1358-residue protein sequence, read N- to C-terminus: Tenascin-R (1358 aa).

The signal sequence occupies residues 1–31; sequence MGADGETVVLKNMLIGINLILLGSMIKPSEC. O-linked (GalNAc...) threonine glycosylation is found at threonine 36 and threonine 37. Residue asparagine 55 is glycosylated (N-linked (GlcNAc...) asparagine). Residues 127–157 are a coiled coil; that stretch reads CASSAQVLQELLSRIEMLEREVSVLRDQCNA. O-linked (Xyl...) (chondroitin sulfate) serine glycosylation is present at serine 176. N-linked (GlcNAc...) asparagine glycosylation is found at asparagine 180 and asparagine 198. 3 consecutive EGF-like domains span residues 188 to 199, 219 to 230, and 250 to 261; these read CICNEGWFGKNC, CICDSEYSGDDC, and CVCEEPYTGEDC. Residue serine 271 is glycosylated (O-linked (Xyl...) (chondroitin sulfate) serine). A glycan (N-linked (GlcNAc...) asparagine) is linked at asparagine 278. The 12-residue stretch at 281 to 292 folds into the EGF-like 4 domain; the sequence is CLCEEGYVGEDC. 3 cysteine pairs are disulfide-bonded: cysteine 292–cysteine 301, cysteine 297–cysteine 312, and cysteine 314–cysteine 323. An O-linked (Xyl...) (chondroitin sulfate) serine glycan is attached at serine 302. One can recognise an EGF-like 5 domain in the interval 312–323; it reads CVCEEGYQGPDC. 9 Fibronectin type-III domains span residues 328 to 420, 421 to 505, 506 to 595, 596 to 687, 688 to 777, 778 to 865, 866 to 955, 956 to 1042, and 1043 to 1130; these read PPED…TPQG, LQFK…TVID, GPTQ…TEID, APKN…TELD, SPRD…FRPI, SHLH…TGID, PPKD…AMDN, PVDL…TLLD, and PPAN…TGGR. Asparagine 392, asparagine 470, and asparagine 581 each carry an N-linked (GlcNAc...) asparagine glycan. Serine 724 bears the Phosphoserine mark. N-linked (GlcNAc...) asparagine glycans are attached at residues asparagine 791, asparagine 874, asparagine 1036, asparagine 1046, and asparagine 1261. A Fibrinogen C-terminal domain is found at 1129-1344; it reads GRVFPHPQDC…FVEMKMRPYN (216 aa).

The protein belongs to the tenascin family. Forms oligomers. Interacts with CNTN1, TNC, and FN1. Interacts with BCAN and ACAN in a calcium-dependent manner. Interacts with SCN2B, PTPRZ1, and CSPG3. In terms of processing, contains N-linked oligosaccharides, O-linked sialylated structures and O-linked chondroitin sulfate glycosaminoglycans. Contains N-linked oligosaccharides with a sulfated carbohydrate structure. O-glycosylated on Thr-36 or Thr-37 with a core 1 or possibly core 8 glycan. In terms of tissue distribution, brain specific.

It localises to the secreted. The protein resides in the extracellular space. The protein localises to the extracellular matrix. Functionally, neural extracellular matrix (ECM) protein involved in interactions with different cells and matrix components. These interactions can influence cellular behavior by either evoking a stable adhesion and differentiation, or repulsion and inhibition of neurite growth. Binding to cell surface gangliosides inhibits RGD-dependent integrin-mediated cell adhesion and results in an inhibition of PTK2/FAK1 (FAK) phosphorylation and cell detachment. Binding to membrane surface sulfatides results in a oligodendrocyte adhesion and differentiation. Interaction with CNTN1 induces a repulsion of neurons and an inhibition of neurite outgrowth. Interacts with SCN2B may play a crucial role in clustering and regulation of activity of sodium channels at nodes of Ranvier. TNR-linked chondroitin sulfate glycosaminoglycans are involved in the interaction with FN1 and mediate inhibition of cell adhesion and neurite outgrowth. The highly regulated addition of sulfated carbohydrate structure may modulate the adhesive properties of TNR over the course of development and during synapse maintenance. The sequence is that of Tenascin-R (TNR) from Homo sapiens (Human).